The sequence spans 354 residues: Chorismate synthase (354 aa).

Residue arginine 48 participates in NADP(+) binding. FMN contacts are provided by residues 125-127 (RAS), alanine 280, 295-299 (KPIPS), and arginine 321.

It belongs to the chorismate synthase family. As to quaternary structure, homotetramer. It depends on FMNH2 as a cofactor.

It carries out the reaction 5-O-(1-carboxyvinyl)-3-phosphoshikimate = chorismate + phosphate. Its pathway is metabolic intermediate biosynthesis; chorismate biosynthesis; chorismate from D-erythrose 4-phosphate and phosphoenolpyruvate: step 7/7. Its function is as follows. Catalyzes the anti-1,4-elimination of the C-3 phosphate and the C-6 proR hydrogen from 5-enolpyruvylshikimate-3-phosphate (EPSP) to yield chorismate, which is the branch point compound that serves as the starting substrate for the three terminal pathways of aromatic amino acid biosynthesis. This reaction introduces a second double bond into the aromatic ring system. This Syntrophus aciditrophicus (strain SB) protein is Chorismate synthase.